Here is a 1009-residue protein sequence, read N- to C-terminus: UvrABC system protein A (1009 aa).

32–39 (GLSGSGKS) contributes to the ATP binding site. ABC transporter domains follow at residues 314–592 (WSHG…AESQ) and 612–941 (RDPS…KFLR). An ATP-binding site is contributed by 645–652 (GVSGSGKS). A C4-type zinc finger spans residues 744–770 (CENCSGDGTIKIEMNFLPDVYVPCEVC). Residues 956-1009 (KAPRKTAARKTAAAKSTTKKTATVRTTNNTATKKAAAVTKKTAPAKKTTRARKA) form a disordered region. The segment covering 964 to 997 (RKTAAAKSTTKKTATVRTTNNTATKKAAAVTKKT) has biased composition (low complexity). A compositionally biased stretch (basic residues) spans 998-1009 (APAKKTTRARKA).

The protein belongs to the ABC transporter superfamily. UvrA family. In terms of assembly, forms a heterotetramer with UvrB during the search for lesions.

Its subcellular location is the cytoplasm. Functionally, the UvrABC repair system catalyzes the recognition and processing of DNA lesions. UvrA is an ATPase and a DNA-binding protein. A damage recognition complex composed of 2 UvrA and 2 UvrB subunits scans DNA for abnormalities. When the presence of a lesion has been verified by UvrB, the UvrA molecules dissociate. The chain is UvrABC system protein A from Streptomyces avermitilis (strain ATCC 31267 / DSM 46492 / JCM 5070 / NBRC 14893 / NCIMB 12804 / NRRL 8165 / MA-4680).